We begin with the raw amino-acid sequence, 941 residues long: Isoleucine--tRNA ligase (941 aa).

The 'HIGH' region signature appears at 59–69 (PYANGNIHIGH). Glu-562 is a binding site for L-isoleucyl-5'-AMP. Residues 603 to 607 (KMSKS) carry the 'KMSKS' region motif. Residue Lys-606 coordinates ATP. Zn(2+)-binding residues include Cys-904, Cys-907, Cys-924, and Cys-927.

The protein belongs to the class-I aminoacyl-tRNA synthetase family. IleS type 1 subfamily. Monomer. The cofactor is Zn(2+).

The protein resides in the cytoplasm. The catalysed reaction is tRNA(Ile) + L-isoleucine + ATP = L-isoleucyl-tRNA(Ile) + AMP + diphosphate. Functionally, catalyzes the attachment of isoleucine to tRNA(Ile). As IleRS can inadvertently accommodate and process structurally similar amino acids such as valine, to avoid such errors it has two additional distinct tRNA(Ile)-dependent editing activities. One activity is designated as 'pretransfer' editing and involves the hydrolysis of activated Val-AMP. The other activity is designated 'posttransfer' editing and involves deacylation of mischarged Val-tRNA(Ile). The sequence is that of Isoleucine--tRNA ligase from Haemophilus influenzae (strain PittEE).